A 663-amino-acid polypeptide reads, in one-letter code: Polyunsaturated fatty acid lipoxygenase ALOX12 (663 aa).

The PLAT domain occupies Gly2–Arg114. Residues Leu115–Ile663 enclose the Lipoxygenase domain. The residue at position 246 (Ser246) is a Phosphoserine. Residues His360, His365, His540, Asn544, and Ile663 each contribute to the Fe cation site.

This sequence belongs to the lipoxygenase family. Fe cation is required as a cofactor. As to expression, expressed in vascular smooth muscle cells.

The protein localises to the cytoplasm. Its subcellular location is the cytosol. The protein resides in the membrane. The enzyme catalyses (5Z,8Z,11Z,14Z)-eicosatetraenoate + O2 = (12S)-hydroperoxy-(5Z,8Z,10E,14Z)-eicosatetraenoate. The catalysed reaction is (5Z,8Z,11Z,14Z)-eicosatetraenoate + O2 = (15S)-hydroperoxy-(5Z,8Z,11Z,13E)-eicosatetraenoate. It catalyses the reaction 2 leukotriene A4 + O2 + 2 H2O = 2 lipoxin A4. It carries out the reaction 2 leukotriene A4 + O2 + 2 H2O = 2 lipoxin B4. The enzyme catalyses (14S)-hydroperoxy-(4Z,7Z,10Z,12E,16Z,19Z)-docosahexaenoate = (13S,14S)-epoxy-(4Z,7Z,9E,11E,16Z,19Z)-docosahexaenoate + H2O. The catalysed reaction is N-(5Z,8Z,11Z,14Z)-eicosatetraenoyl-L-alanine + O2 = N-(15S)-hydroperoxy-(5Z,8Z,11Z,13E)-eicosatetraenoyl-alanine. It catalyses the reaction N-(5Z,8Z,11Z,14Z)-eicosatetraenoyl-L-alanine + O2 = N-(12S)-hydroperoxy-(5Z,8Z,10E,14Z)-eicosatetraenoyl-alanine. It carries out the reaction N-(5Z,8Z,11Z,14Z)-eicosatetraenoyl-gamma-aminobutanoate + O2 = N-(15S)-hydroperoxy-(5Z,8Z,11Z,13E)-eicosatetraenoyl-gamma-aminobutanoate. The enzyme catalyses N-(5Z,8Z,11Z,14Z)-eicosatetraenoyl-gamma-aminobutanoate + O2 = N-(12S)-hydroperoxy-(5Z,8Z,10E,14Z)-eicosatetraenoyl-gamma-aminobutanoate. The catalysed reaction is N-(5Z,8Z,11Z,14Z)-eicosatetraenoyl-glycine + O2 = N-(15S)-hydroperoxy-(5Z,8Z,11Z,13E)-eicosatetraenoyl-glycine. It catalyses the reaction N-(5Z,8Z,11Z,14Z)-eicosatetraenoyl-glycine + O2 = N-(12S)-hydroperoxy-(5Z,8Z,10E,14Z)-eicosatetraenoyl-glycine. It carries out the reaction N-(5Z,8Z,11Z,14Z)-eicosatetraenoyl-taurine + O2 = N-(12S)-hydroperoxy-(5Z,8Z,10E,14Z)-eicosatetraenoyl-taurine. The enzyme catalyses N-(5Z,8Z,11Z,14Z)-eicosatetraenoyl-taurine + O2 = N-(15S)-hydroperoxy-(5Z,8Z,11Z,13E)-eicosatetraenoyl-taurine. The catalysed reaction is (4Z,7Z,10Z,13Z,16Z,19Z)-docosahexaenoate + O2 = (14S)-hydroperoxy-(4Z,7Z,10Z,12E,16Z,19Z)-docosahexaenoate. It catalyses the reaction (7S)-hydroperoxy-(4Z,8E,10Z,13Z,16Z,19Z)-docosahexaenoate + O2 = (7S,14S)-dihydroperoxy-(4Z,8E,10Z,12E,16Z,19Z)-docosahexaenoate. It carries out the reaction (7S)-hydroperoxy-(4Z,8E,10Z,13Z,16Z,19Z)-docosahexaenoate + O2 = (7S,17S)-dihydroperoxy-(4Z,8E,10Z,13Z,15E,19Z)-docosahexaenoate. The enzyme catalyses (5Z,8Z,11Z,14Z,17Z)-eicosapentaenoate + O2 = (12S)-hydroperoxy-(5Z,8Z,10E,14Z,17Z)-eicosapentaenoate. The catalysed reaction is (8Z,11Z,14Z)-eicosatrienoate + O2 = (12S)-hydroperoxy-(8Z,10E,14Z)-eicosatrienoate. It catalyses the reaction (9Z,12Z)-octadecadienoate + O2 = (13S)-hydroperoxy-(9Z,11E)-octadecadienoate. It carries out the reaction (5Z,8Z,11Z)-eicosatrienoate + O2 = (12S)-hydroperoxy-(5Z,8Z,10E)-eicosatrienoate. The enzyme catalyses (14R,15S)-epoxy-(5Z,8Z,11Z)-eicosatrienoate + O2 = (12S)-hydroperoxy-(14R,15S)-epoxy-(5Z,8Z,10E)-eicosatrienoate. The catalysed reaction is (14S,15R)-epoxy-(5Z,8Z,11Z)-eicosatrienoate + O2 = (12S)-hydroperoxy-(14S,15R)-epoxy-(5Z,8Z,10E)-eicosatrienoate. It functions in the pathway lipid metabolism; hydroperoxy eicosatetraenoic acid biosynthesis. Its activity is regulated as follows. Activated by EGF. Arachidonic acid conversion is inhibited by (13S,14S)-epoxy-(4Z,7Z,9E,11E,16Z,19Z)-docosahexaenoate (13S,14S-epoxy-DHA). Arachidonate 12-lipoxygenase activity is decreased when PH decreases from 7.4 to 6. Its function is as follows. Catalyzes the regio and stereo-specific incorporation of molecular oxygen into free and esterified polyunsaturated fatty acids generating lipid hydroperoxides that can be further reduced to the corresponding hydroxy species. Mainly converts arachidonate ((5Z,8Z,11Z,14Z)-eicosatetraenoate) to the specific bioactive lipid (12S)-hydroperoxyeicosatetraenoate/(12S)-HPETE. Through the production of bioactive lipids like (12S)-HPETE it regulates different biological processes including platelet activation. It can also catalyze the epoxidation of double bonds of polyunsaturated fatty acids such as (14S)-hydroperoxy-docosahexaenoate/(14S)-HPDHA resulting in the formation of (13S,14S)-epoxy-DHA. Furthermore, it may participate in the sequential oxidations of DHA ((4Z,7Z,10Z,13Z,16Z,19Z)-docosahexaenoate) to generate specialized pro-resolving mediators (SPMs) like resolvin D5 ((7S,17S)-diHPDHA) and (7S,14S)-diHPDHA, that actively down-regulate the immune response and have anti-aggregation properties with platelets. An additional function involves a multistep process by which it transforms leukotriene A4/LTA4 into the bioactive lipids lipoxin A4/LXA4 and lipoxin B4/LXB4, both are vasoactive and LXA4 may regulate neutrophil function via occupancy of specific recognition sites. Can also peroxidize linoleate ((9Z,12Z)-octadecadienoate) to (13S)-hydroperoxyoctadecadienoate/ (13S-HPODE). Due to its role in regulating both the expression of the vascular endothelial growth factor (VEGF, an angiogenic factor involved in the survival and metastasis of solid tumors) and the expression of integrin beta-1 (known to affect tumor cell migration and proliferation), it can be regarded as protumorigenic. Important for cell survival, as it may play a role not only in proliferation but also in the prevention of apoptosis in vascular smooth muscle cells. The polypeptide is Polyunsaturated fatty acid lipoxygenase ALOX12 (Homo sapiens (Human)).